The following is a 186-amino-acid chain: Nicotinamide-nucleotide adenylyltransferase (186 aa).

It belongs to the archaeal NMN adenylyltransferase family.

It localises to the cytoplasm. It carries out the reaction beta-nicotinamide D-ribonucleotide + ATP + H(+) = diphosphate + NAD(+). The protein operates within cofactor biosynthesis; NAD(+) biosynthesis; NAD(+) from nicotinamide D-ribonucleotide: step 1/1. This Pyrococcus horikoshii (strain ATCC 700860 / DSM 12428 / JCM 9974 / NBRC 100139 / OT-3) protein is Nicotinamide-nucleotide adenylyltransferase.